Here is a 1200-residue protein sequence, read N- to C-terminus: NACHT, LRR and PYD domains-containing protein 5 (1200 aa).

The Pyrin domain maps to 57-148 (SLTFSSYGLQ…SEKARDDMKR (92 aa)). The segment covering 142 to 152 (ARDDMKRHSPE) has biased composition (basic and acidic residues). A disordered region spans residues 142-232 (ARDDMKRHSP…TEEQGHGGDT (91 aa)). Polar residues predominate over residues 173–182 (QAVQQDSATA). 2 stretches are compositionally biased toward low complexity: residues 192 to 202 (QAMEQEGATAA) and 209 to 221 (ISQAMEQEGATAA). In terms of domain architecture, NACHT spans 280 to 602 (RTVVLHGKSG…ALYYVLEGLE (323 aa)). Position 286–293 (286–293 (GKSGIGKS)) interacts with ATP. LRR repeat units follow at residues 704–727 (LNSFQEVWLPINQNLDLIASSFCL), 730–753 (CPYLRKIRVDVKGIFPRDESAEAC), 780–803 (HPHLRQLDLGSSILTERAMKTLCA), 809–832 (TCKIQTLMFRNAQITPGVQHLWRI), 836–863 (NRNLRSLNLGGTHLKEEDVRMACEALKH), 865–892 (KCLLESLRLDCCGLTHACYLKISQILTT), 893–916 (SPSLKSLSLAGNKVTDQGVMPLSD), 950–973 (NRSLTHLCLSNNSLGNEGVNLLCR), 979–1002 (HCSLQRLMLNQCHLDTAGCGFLAL), 1007–1034 (NSWLTHLSLSMNPVEDNGVKLLCEVMRE), 1036–1059 (SCHLQDLELVKCHLTAACCESLSC), 1064–1092 (SRHLKSLDLTDNALGDGGVAALCEGLKQK), and 1121–1142 (NRHLTSLNLVQNNFSPKGMMKL).

Belongs to the NLRP family. As to quaternary structure, component of the subcortical maternal complex (SCMC), at least composed of NLRP5, KHDC3, OOEP, and TLE6 isoform 1. Within the complex, interacts with OOEP, KHDC3L and TLE6. The SCMC may facilitate translocation of its components between the nuclear and cytoplasmic compartments. As part of the SCMC interacts with the SCMC-associated protein ZBED3. As part of the SCMC interacts with the SCMC-associated protein CFL1/Cofilin-1. Interacts with PRKCE. Interacts with TUBB3 at cytoskeleton microtubules. In terms of processing, phosphorylated by PRKCE. Expressed in cumulus cells (at protein level). Highly abundant in oocytes and early embryos, however poorly expressed in somatic tissues such as the liver and spinal cord.

Its subcellular location is the cytoplasm. It localises to the cytoplasmic vesicle. The protein resides in the secretory vesicle. It is found in the cortical granule. The protein localises to the mitochondrion. Its subcellular location is the nucleus. It localises to the nucleolus. The protein resides in the golgi apparatus. In terms of biological role, component of the subcortical maternal complex (SCMC), a multiprotein complex that plays a key role in early embryonic development. The SCMC complex is a structural constituent of cytoplasmic lattices, which consist in fibrous structures found in the cytoplasm of oocytes and preimplantation embryos. They are required to store maternal proteins critical for embryonic development, such as proteins that control epigenetic reprogramming of the preimplantation embryo, and prevent their degradation or activation. Required for the localization of cortical granules to the cortex of oocytes, via association with the cortical actin scaffold. Required for cortical actin clearance prior to oocyte exocytosis and prevention of polyspermy. Involved in regulating post-fertilization Ca(2+) release and endoplasmic reticulum storage (ER) storage via regulation of cellular localization. May be involved in the localization of mitochondria to the cytoplasm and perinuclear region in oocytes and early stage embryos, independent of its role in CPL formation. In Homo sapiens (Human), this protein is NACHT, LRR and PYD domains-containing protein 5 (NLRP5).